The following is a 634-amino-acid chain: Polyadenylate-binding protein 1A (634 aa).

4 consecutive RRM domains span residues 11–89, 99–175, 191–268, and 294–370; these read ASLY…WSQR, GNIF…RFKS, TNVY…RAQK, and VNLY…LAQR. The PABC domain maps to 541–618; the sequence is QEPLTASMLA…AVAVLQAHQA (78 aa).

The protein belongs to the polyadenylate-binding protein type-1 family. Interacts with ybx1; interaction recruits pabpc1a on C5-methylcytosine (m5C)-containing mRNAs, preventing their degradation.

Its subcellular location is the cytoplasm. In terms of biological role, binds the poly(A) tail of mRNA. Prevents mRNA deadenylation and confers poly(A) stability. Binds to N6-methyladenosine (m6A)-containing mRNAs. Stimulates the translation of mRNAs to which it is bound, acting, at least in part, with dazl. Involved in the maternal-to-zygotic transition in early embryo via interaction with ybx1: interaction recruits pabpc1a on C5-methylcytosine (m5C)-containing maternal mRNAs, preventing their degradation. The chain is Polyadenylate-binding protein 1A from Danio rerio (Zebrafish).